Here is a 145-residue protein sequence, read N- to C-terminus: Partner of bursicon (145 aa).

A signal peptide spans 1–28 (MKENFSIMFIHSIFLILIIFIYSNETIA). Intrachain disulfides connect C36/C94, C60/C109, C69/C135, C73/C137, and C91/C140. A CTCK domain is found at 36–131 (CETLQSEVHI…NGVMEIKIRE (96 aa)).

Heterodimer of burs and pburs.

The protein resides in the secreted. In terms of biological role, final heterodimeric neurohormone released at the end of the molting cycle, involved in the sclerotization (tanning) of the insect cuticle, melanization and wing spreading. The chain is Partner of bursicon (pburs) from Apis mellifera (Honeybee).